The chain runs to 468 residues: Putrescine aminotransferase (468 aa).

Pyridoxal 5'-phosphate contacts are provided by residues 150-151 and Q274; that span reads GT. The residue at position 300 (K300) is an N6-(pyridoxal phosphate)lysine. T332 provides a ligand contact to pyridoxal 5'-phosphate.

It belongs to the class-III pyridoxal-phosphate-dependent aminotransferase family. Putrescine aminotransferase subfamily. Pyridoxal 5'-phosphate is required as a cofactor.

The catalysed reaction is an alkane-alpha,omega-diamine + 2-oxoglutarate = an omega-aminoaldehyde + L-glutamate. The enzyme catalyses putrescine + 2-oxoglutarate = 1-pyrroline + L-glutamate + H2O. It carries out the reaction cadaverine + 2-oxoglutarate = 5-aminopentanal + L-glutamate. It functions in the pathway amine and polyamine degradation; putrescine degradation; 4-aminobutanal from putrescine (transaminase route): step 1/1. In terms of biological role, catalyzes the aminotransferase reaction from putrescine to 2-oxoglutarate, leading to glutamate and 4-aminobutanal, which spontaneously cyclizes to form 1-pyrroline. This is the first step in one of two pathways for putrescine degradation, where putrescine is converted into 4-aminobutanoate (gamma-aminobutyrate or GABA) via 4-aminobutanal. Also functions as a cadaverine transaminase in a a L-lysine degradation pathway to succinate that proceeds via cadaverine, glutarate and L-2-hydroxyglutarate. The protein is Putrescine aminotransferase of Pectobacterium atrosepticum (strain SCRI 1043 / ATCC BAA-672) (Erwinia carotovora subsp. atroseptica).